A 422-amino-acid polypeptide reads, in one-letter code: 5-hydroxytryptamine receptor 1A (422 aa).

At Met-1 to Ile-38 the chain is on the extracellular side. Asn-10, Asn-11, and Asn-24 each carry an N-linked (GlcNAc...) asparagine glycan. A helical transmembrane segment spans residues Thr-39–Ala-59. The Cytoplasmic portion of the chain corresponds to Ala-60–Tyr-73. Residues Leu-74–Val-98 traverse the membrane as a helical segment. Residues Leu-99 to Val-107 lie on the Extracellular side of the membrane. The chain crosses the membrane as a helical span at residues Thr-108 to Leu-132. The cysteines at positions 109 and 187 are disulfide-linked. Residues Asp-116 and Cys-120 each coordinate serotonin. The DRY motif; important for ligand-induced conformation changes signature appears at Asp-133–Tyr-135. The Cytoplasmic segment spans residues Asp-133–Arg-152. Residues Ala-153–Gly-174 form a helical membrane-spanning segment. Residues Trp-175–His-193 are Extracellular-facing. The chain crosses the membrane as a helical span at residues Gly-194–Gly-216. The Cytoplasmic segment spans residues Arg-217–Thr-346. Residues Gly-237–Glu-262 form a disordered region. Positions 345, 346, and 352 each coordinate 1D-myo-inositol 4-phosphate. A helical transmembrane segment spans residues Leu-347 to Phe-370. Residues Cys-371–Pro-378 lie on the Extracellular side of the membrane. Residues Thr-379–Phe-403 form a helical membrane-spanning segment. Residues Asn-396–Tyr-400 carry the NPxxY motif; important for ligand-induced conformation changes and signaling motif. The 1D-myo-inositol 4-phosphate site is built by Phe-403, Asn-404, and Lys-405. Over Asn-404–Arg-422 the chain is Cytoplasmic.

Belongs to the G-protein coupled receptor 1 family. 5-hydroxytryptamine receptor subfamily. HTR1A sub-subfamily. As to quaternary structure, heterodimer; heterodimerizes with GPER1. Interacts with YIF1B. Interacts with GPR39 and GALR1.

The protein localises to the cell membrane. It localises to the cell projection. It is found in the dendrite. Its activity is regulated as follows. G-protein coupled receptor activity is regulated by lipids: phosphatidylinositol 4-phosphate increases HTR1A-mediated activity. Functionally, G-protein coupled receptor for 5-hydroxytryptamine (serotonin). Also functions as a receptor for various drugs and psychoactive substances. Ligand binding causes a conformation change that triggers signaling via guanine nucleotide-binding proteins (G proteins) and modulates the activity of downstream effectors, such as adenylate cyclase. HTR1A is coupled to G(i)/G(o) G alpha proteins and mediates inhibitory neurotransmission: signaling inhibits adenylate cyclase activity and activates a phosphatidylinositol-calcium second messenger system that regulates the release of Ca(2+) ions from intracellular stores. Beta-arrestin family members regulate signaling by mediating both receptor desensitization and resensitization processes. This Equus caballus (Horse) protein is 5-hydroxytryptamine receptor 1A (HTR1A).